The sequence spans 616 residues: UvrABC system protein C (616 aa).

In terms of domain architecture, GIY-YIG spans alanine 11–valine 85. The region spanning alanine 194 to leucine 229 is the UVR domain.

The protein belongs to the UvrC family. In terms of assembly, interacts with UvrB in an incision complex.

The protein localises to the cytoplasm. In terms of biological role, the UvrABC repair system catalyzes the recognition and processing of DNA lesions. UvrC both incises the 5' and 3' sides of the lesion. The N-terminal half is responsible for the 3' incision and the C-terminal half is responsible for the 5' incision. This is UvrABC system protein C from Deinococcus geothermalis (strain DSM 11300 / CIP 105573 / AG-3a).